Here is a 1198-residue protein sequence, read N- to C-terminus: Potassium/sodium hyperpolarization-activated cyclic nucleotide-gated channel 4 (1198 aa).

The Cytoplasmic segment spans residues 1–266; sequence MDKLPPSMRK…PYSDFRFYWD (266 aa). The tract at residues 25–183 is disordered; sequence IMDEEEDGEE…PASASCEQPS (159 aa). Over residues 26–36 the composition is skewed to acidic residues; the sequence is MDEEEDGEEEG. Residues 105-118 are compositionally biased toward gly residues; it reads SRGGGSGGAGGGSS. Residues 121-132 show a composition bias toward basic and acidic residues; the sequence is HLHDSAEERRLI. Position 139 is a phosphoserine (serine 139). The span at 164-174 shows a compositional bias: pro residues; it reads ASPPPQQPPQP. Residues 209-260 form an involved in subunit assembly region; the sequence is GQSGFMQRQFGAMLQPGVNKFSLRMFGSQKAVEREQERVKSAGFWIIHPYSD. The chain crosses the membrane as a helical span at residues 267–287; it reads LTMLLLMVGNLIIIPVGITFF. The Extracellular segment spans residues 288–293; it reads KDENTT. The helical transmembrane segment at 294–314 threads the bilayer; sequence PWIVFNVVSDTFFLIDLVLNF. Residues 315 to 340 lie on the Cytoplasmic side of the membrane; the sequence is RTGIVVEDNTEIILDPQRIKMKYLKS. Residues 341–361 traverse the membrane as a helical segment; it reads WFVVDFISSIPVDYIFLIVET. Over 362-368 the chain is Extracellular; that stretch reads RIDSEVY. Residues 369–389 form a helical; Voltage-sensor membrane-spanning segment; it reads KTARALRIVRFTKILSLLRLL. Over 390 to 420 the chain is Cytoplasmic; the sequence is RLSRLIRYIHQWEEIFHMTYDLASAVVRIVN. A helical transmembrane segment spans residues 421 to 441; it reads LIGMMLLLCHWDGCLQFLVPM. Topologically, residues 442 to 464 are extracellular; the sequence is LQDFPHDCWVSINGMVNNSWGKQ. The N-linked (GlcNAc...) asparagine glycan is linked to asparagine 458. An intramembrane region (pore-forming) is located at residues 465–486; it reads YSYALFKAMSHMLCIGYGRQAP. At 487-496 the chain is on the extracellular side; it reads VGMSDVWLTM. Residues 497 to 517 form a helical membrane-spanning segment; sequence LSMIVGATCYAMFIGHATALI. The Cytoplasmic segment spans residues 518-1198; sequence QSLDSSRRQY…PVRSKLPSNL (681 aa). Residues tyrosine 559, lysine 562, phenylalanine 564, and glutamate 566 each coordinate 3',5'-cyclic GMP. 3',5'-cyclic AMP-binding residues include glycine 659, glutamate 660, cysteine 662, arginine 669, threonine 670, valine 673, and arginine 710. The tract at residues 804 to 1198 is disordered; sequence AIFRPPPGPG…PVRSKLPSNL (395 aa). Composition is skewed to low complexity over residues 831-856 and 866-880; these read SLIPSALGSASPASSPSQVDTPSSSS and SAPPGLSPLLPSSSS. The segment covering 881-894 has biased composition (pro residues); the sequence is SPPPGACSSPPAPT. Composition is skewed to low complexity over residues 895–905, 913–937, and 965–985; these read PSTSTAATTTG, LGGSLSSSDSPLLTPLQPGARSPQA, and RSPSSSPGQLGQPPGELSPGL. Residues 1027–1040 are compositionally biased toward pro residues; sequence GHSPGPPRTFPSAP. Residues 1043–1054 show a composition bias toward low complexity; that stretch reads ASGSHGSLLLPP. 2 positions are modified to phosphoserine: serine 1103 and serine 1106. Gly residues predominate over residues 1120–1132; sequence AGGGSGSSGGLGP.

Belongs to the potassium channel HCN family. In terms of assembly, homotetramer. The potassium channel is composed of a homo- or heterotetrameric complex of pore-forming subunits. Interacts with PEX5L with a 4:4 HCN4:PEX5L stoichiometry; reduces the effects of cAMP on the voltage-dependence and rate of activation. Interacts with IRAG1; regulates HCN4 channel activity. Interacts with IRAG2; regulates HCN4 channel activity. Post-translationally, S-palmitoylated. Highly expressed in pyramidal and granule layer of the hippocampus, in thalamus anterior nucleus, in the supraoptic nucleus in hypothalamus, in cerebellum, and in trapezoid nuclei and superior olivary complex in the auditory system. Detected in a subset of elongated cells in taste buds.

It localises to the cell membrane. It carries out the reaction K(+)(in) = K(+)(out). The catalysed reaction is Na(+)(in) = Na(+)(out). Activated by cAMP and at 100 times higher concentrationsand to a lesser extent by cGMP and cCMP. cAMP binding causes a conformation change that leads to the assembly of an active tetramer and channel opening. Binding of cAMP removes a tonic inhibition conferred by cyclic nucleotide-binding domain (CNBD) on channel opening. Cyclic dinucleotides can modulate HCN4 channel; cyclic dinucleotides acting as potent antagonists of cAMP. Inhibited by extracellular Cs(+) ions. Auxiliary subunits can also regulate HCN4 channel. IRAG1 causes a gain-of-function by shifting HCN4 activation to more depolarized membrane potentials in the absence of cAMP. In contrast, IRAG2 causes a loss-of-function by inhibiting cAMP-dependent potentiation of HCN4 activation. In terms of biological role, hyperpolarization-activated ion channel that are permeable to Na(+) and K(+) ions with very slow activation and inactivation. Exhibits higher selectivity for K(+) over Na(+) ions. Contributes to the native pacemaker currents in heart (If) that regulate the rhythm of heart beat. Contributes to the native pacemaker currents in neurons (Ih). May mediate responses to sour stimuli. In Rattus norvegicus (Rat), this protein is Potassium/sodium hyperpolarization-activated cyclic nucleotide-gated channel 4 (Hcn4).